The primary structure comprises 174 residues: Transcriptional repressor NrdR (174 aa).

The segment at 3 to 34 (CPICHFPETDVIDTRKLYEGEVIRRRRKCRAC) is a zinc-finger region. The region spanning 49–139 (LMVVKKDGTR…VYRSFADIGK (91 aa)) is the ATP-cone domain. The tract at residues 151–174 (EGTRNGHSSAATTDQGTTDNHSRM) is disordered. A compositionally biased stretch (polar residues) spans 155–174 (NGHSSAATTDQGTTDNHSRM).

This sequence belongs to the NrdR family. The cofactor is Zn(2+).

In terms of biological role, negatively regulates transcription of bacterial ribonucleotide reductase nrd genes and operons by binding to NrdR-boxes. This chain is Transcriptional repressor NrdR, found in Chloroflexus aggregans (strain MD-66 / DSM 9485).